A 100-amino-acid chain; its full sequence is Urease subunit gamma (100 aa).

Belongs to the urease gamma subunit family. Heterotrimer of UreA (gamma), UreB (beta) and UreC (alpha) subunits. Three heterotrimers associate to form the active enzyme.

It localises to the cytoplasm. It catalyses the reaction urea + 2 H2O + H(+) = hydrogencarbonate + 2 NH4(+). It participates in nitrogen metabolism; urea degradation; CO(2) and NH(3) from urea (urease route): step 1/1. This chain is Urease subunit gamma, found in Pseudomonas fluorescens (strain Pf0-1).